The chain runs to 1140 residues: Centrosomal protein of 135 kDa (1140 aa).

The homodimerization stretch occupies residues 11-64; that stretch reads NIRKRLDQLGYRQTLSVDSLPLVEKLFSDLVHTTESLRQCRLSSGKAEKESANL. Coiled coils occupy residues 75–151 and 199–416; these read NTRL…KNLR and LQVA…FAVT. S439 carries the post-translational modification Phosphoserine. Coiled-coil stretches lie at residues 447–644, 668–1036, and 1079–1113; these read LKGI…LENK, SLRI…LESL, and TSML…AIQE. The residue at position 688 (S688) is a Phosphoserine. The segment covering 1117 to 1131 has biased composition (low complexity); that stretch reads LGLPTSPLSSTLKSP. Positions 1117–1140 are disordered; that stretch reads LGLPTSPLSSTLKSPVQTPDHINA. At T1121 the chain carries Phosphothreonine. Phosphoserine is present on S1130. T1134 carries the post-translational modification Phosphothreonine.

It belongs to the CEP135/TSGA10 family. Homodimer. Interacts with CEP250. Interacts with DCTN2.

Its subcellular location is the cytoplasm. It is found in the cytoskeleton. The protein localises to the microtubule organizing center. The protein resides in the centrosome. It localises to the centriole. Functionally, centrosomal microtubule-binding protein involved in centriole biogenesis. Acts as a scaffolding protein during early centriole biogenesis. Required for the targeting of centriole satellite proteins to centrosomes such as of PCM1, SSX2IP and CEP290 and recruitment of WRAP73 to centrioles. Also required for centriole-centriole cohesion during interphase by acting as a platform protein for CEP250 at the centriole. Required for the recruitment of CEP295 to the proximal end of new-born centrioles at the centriolar microtubule wall during early S phase in a PLK4-dependent manner. This chain is Centrosomal protein of 135 kDa (Cep135), found in Mus musculus (Mouse).